The sequence spans 427 residues: Histidinol dehydrogenase (427 aa).

Residues serine 232, glutamine 254, and histidine 257 each contribute to the substrate site. The Zn(2+) site is built by glutamine 254 and histidine 257. Residues glutamate 322 and histidine 323 each act as proton acceptor in the active site. Residues histidine 323, aspartate 356, glutamate 410, and histidine 415 each contribute to the substrate site. Aspartate 356 is a binding site for Zn(2+). A Zn(2+)-binding site is contributed by histidine 415.

Belongs to the histidinol dehydrogenase family. Zn(2+) serves as cofactor.

It catalyses the reaction L-histidinol + 2 NAD(+) + H2O = L-histidine + 2 NADH + 3 H(+). It participates in amino-acid biosynthesis; L-histidine biosynthesis; L-histidine from 5-phospho-alpha-D-ribose 1-diphosphate: step 9/9. In terms of biological role, catalyzes the sequential NAD-dependent oxidations of L-histidinol to L-histidinaldehyde and then to L-histidine. This chain is Histidinol dehydrogenase, found in Listeria innocua serovar 6a (strain ATCC BAA-680 / CLIP 11262).